An 82-amino-acid polypeptide reads, in one-letter code: uncharacterized protein (82 aa).

The next 2 membrane-spanning stretches (helical) occupy residues 8 to 28 and 50 to 70; these read LTTA…LPAP and LYTL…YFVL.

It is found in the cell membrane. This is an uncharacterized protein from Escherichia coli (strain K12).